A 361-amino-acid chain; its full sequence is Queuine tRNA-ribosyltransferase (361 aa).

Aspartate 92 (proton acceptor) is an active-site residue. Substrate is bound by residues aspartate 92–phenylalanine 96, aspartate 146, glutamine 189, and glycine 216. The segment at glycine 247–aspartate 253 is RNA binding. The Nucleophile role is filled by aspartate 266. The tract at residues threonine 271–arginine 275 is RNA binding; important for wobble base 34 recognition. Zn(2+) is bound by residues cysteine 304, cysteine 306, cysteine 309, and histidine 335.

This sequence belongs to the queuine tRNA-ribosyltransferase family. Homodimer. Within each dimer, one monomer is responsible for RNA recognition and catalysis, while the other monomer binds to the replacement base PreQ1. Zn(2+) serves as cofactor.

The enzyme catalyses 7-aminomethyl-7-carbaguanine + guanosine(34) in tRNA = 7-aminomethyl-7-carbaguanosine(34) in tRNA + guanine. It functions in the pathway tRNA modification; tRNA-queuosine biosynthesis. Functionally, catalyzes the base-exchange of a guanine (G) residue with the queuine precursor 7-aminomethyl-7-deazaguanine (PreQ1) at position 34 (anticodon wobble position) in tRNAs with GU(N) anticodons (tRNA-Asp, -Asn, -His and -Tyr). Catalysis occurs through a double-displacement mechanism. The nucleophile active site attacks the C1' of nucleotide 34 to detach the guanine base from the RNA, forming a covalent enzyme-RNA intermediate. The proton acceptor active site deprotonates the incoming PreQ1, allowing a nucleophilic attack on the C1' of the ribose to form the product. After dissociation, two additional enzymatic reactions on the tRNA convert PreQ1 to queuine (Q), resulting in the hypermodified nucleoside queuosine (7-(((4,5-cis-dihydroxy-2-cyclopenten-1-yl)amino)methyl)-7-deazaguanosine). The protein is Queuine tRNA-ribosyltransferase of Rickettsia peacockii (strain Rustic).